The chain runs to 167 residues: Iron-sulfur cluster assembly protein 1 (167 aa).

The transit peptide at 1–50 directs the protein to the mitochondrion; sequence MMLKQAAKKALGLTSRQSTPWSVGILRTYHENVIDHYDNPRNVGSFDKND.

Belongs to the NifU family. Component of the core Fe-S cluster (ISC) assembly machinery. Interacts with HSCB. Requires [2Fe-2S] cluster as cofactor. Expressed in roots, stems, leaves, flowers, pollen and siliques.

The protein resides in the mitochondrion matrix. The protein localises to the cytoplasm. It localises to the cytosol. It participates in cofactor biosynthesis; iron-sulfur cluster biosynthesis. Its function is as follows. Scaffold protein for the de novo synthesis of iron-sulfur (Fe-S) clusters within mitochondria, which is required for maturation of both mitochondrial and cytoplasmic [2Fe-2S] and [4Fe-4S] proteins. First, a [2Fe-2S] cluster is transiently assembled on the scaffold protein ISCU (ISU1, ISU2 or ISU3). In a second step, the cluster is released from ISCU, transferred to a glutaredoxin, followed by the formation of mitochondrial [2Fe-2S] proteins, the synthesis of [4Fe-4S] clusters and their target-specific insertion into the recipient apoproteins. Cluster assembly on ISCU depends on the function of the cysteine desulfurase complex NFS1-ISD11, which serves as the sulfur donor for cluster synthesis, the iron-binding protein frataxin as the putative iron donor, and the electron transfer chain comprised of ferredoxin reductase and ferredoxin, which receive their electrons from NADH. In Arabidopsis thaliana (Mouse-ear cress), this protein is Iron-sulfur cluster assembly protein 1 (ISU1).